The sequence spans 49 residues: Astexin-3 (49 aa).

The propeptide occupies 1–25; it reads MRTYNRSLPARAGLTDLGKVTTHTK. Residues 26–34 constitute a cross-link (isoaspartyl glycine isopeptide (Gly-Asp)); that stretch reads GPTPMVGLD.

This lasso peptide is hydrolyzed to a linear form by the isopeptidase AtxE2, in vitro. The isopeptidase AtxE2 only recognizes the threaded form (but not the unthreaded form).

It is found in the cytoplasm. The protein resides in the secreted. Its function is as follows. Shows weak antimicrobial activity against its phylogenetic relative Caulobacter crescentus. Does not show activity against other bacteria tested (E.coli, Vibrio sp, Burkhoderia thailandensis, and Salmonella newport). The protein is Astexin-3 of Asticcacaulis excentricus (strain ATCC 15261 / DSM 4724 / KCTC 12464 / NCIMB 9791 / VKM B-1370 / CB 48).